Here is a 290-residue protein sequence, read N- to C-terminus: Lipoyl synthase (290 aa).

[4Fe-4S] cluster-binding residues include C44, C49, C55, C70, C74, C77, and S281. In terms of domain architecture, Radical SAM core spans 56–270; it reads WRCGTATFMI…KQIGLEKGFS (215 aa).

The protein belongs to the radical SAM superfamily. Lipoyl synthase family. [4Fe-4S] cluster is required as a cofactor.

Its subcellular location is the cytoplasm. The catalysed reaction is [[Fe-S] cluster scaffold protein carrying a second [4Fe-4S](2+) cluster] + N(6)-octanoyl-L-lysyl-[protein] + 2 oxidized [2Fe-2S]-[ferredoxin] + 2 S-adenosyl-L-methionine + 4 H(+) = [[Fe-S] cluster scaffold protein] + N(6)-[(R)-dihydrolipoyl]-L-lysyl-[protein] + 4 Fe(3+) + 2 hydrogen sulfide + 2 5'-deoxyadenosine + 2 L-methionine + 2 reduced [2Fe-2S]-[ferredoxin]. Its pathway is protein modification; protein lipoylation via endogenous pathway; protein N(6)-(lipoyl)lysine from octanoyl-[acyl-carrier-protein]: step 2/2. Catalyzes the radical-mediated insertion of two sulfur atoms into the C-6 and C-8 positions of the octanoyl moiety bound to the lipoyl domains of lipoate-dependent enzymes, thereby converting the octanoylated domains into lipoylated derivatives. The chain is Lipoyl synthase from Treponema denticola (strain ATCC 35405 / DSM 14222 / CIP 103919 / JCM 8153 / KCTC 15104).